Reading from the N-terminus, the 369-residue chain is 2-aminoethylphosphonate--pyruvate transaminase (369 aa).

Lys-193 carries the post-translational modification N6-(pyridoxal phosphate)lysine.

The protein belongs to the class-V pyridoxal-phosphate-dependent aminotransferase family. PhnW subfamily. In terms of assembly, homodimer. Requires pyridoxal 5'-phosphate as cofactor.

It catalyses the reaction (2-aminoethyl)phosphonate + pyruvate = phosphonoacetaldehyde + L-alanine. Involved in phosphonate degradation. The protein is 2-aminoethylphosphonate--pyruvate transaminase of Pseudomonas fluorescens (strain ATCC BAA-477 / NRRL B-23932 / Pf-5).